The primary structure comprises 333 residues: Protein VTE6, chloroplastic (333 aa).

The N-terminal 65 residues, 1-65, are a transit peptide targeting the chloroplast; it reads MATISSTLLL…SRADGATAAA (65 aa). Helical transmembrane passes span 94 to 114, 126 to 146, 171 to 191, 248 to 268, 274 to 294, and 307 to 327; these read LLIFVLGSPLLVTGLSASGIA, AYGSAGFLLVAAYFVIGTAAT, VIGSSAAGCVCAFLSIYQVGG, TLAGLLASFFLASVGCFLGQI, AVCVLASQIANLGESIIGASF, and VVNVINISLGSIVAILMQQFI.

The protein belongs to the TMEM19 family.

It is found in the plastid. The protein localises to the chloroplast membrane. It catalyses the reaction phytyl phosphate + a ribonucleoside 5'-triphosphate = phytyl diphosphate + a ribonucleoside 5'-diphosphate. It carries out the reaction phytyl phosphate + CTP = phytyl diphosphate + CDP. It participates in cofactor biosynthesis; tocopherol biosynthesis. Phytyl-phosphate kinase catalyzing the conversion of phytyl-monophosphate to phytyl-diphosphate. Involved in the activation and reutilization of phytol from chlorophyll degradation in plant metabolism, including tocopherol (vitamin E) biosynthesis. Involved in the biosynthesis of phylloquinone (vitamin K), which is required for the photosystem I (PSI) complex stability. In Arabidopsis thaliana (Mouse-ear cress), this protein is Protein VTE6, chloroplastic.